A 267-amino-acid polypeptide reads, in one-letter code: Orotidine 5'-phosphate decarboxylase (267 aa).

Substrate-binding positions include Asp37, 59-61 (KTH), 91-100 (DRKFADIGNT), Tyr217, and Arg235. Lys93 acts as the Proton donor in catalysis.

The protein belongs to the OMP decarboxylase family.

It carries out the reaction orotidine 5'-phosphate + H(+) = UMP + CO2. It functions in the pathway pyrimidine metabolism; UMP biosynthesis via de novo pathway; UMP from orotate: step 2/2. This is Orotidine 5'-phosphate decarboxylase (URA3) from Kluyveromyces marxianus (Yeast).